Reading from the N-terminus, the 419-residue chain is Multidrug efflux pump Tap (419 aa).

12 helical membrane-spanning segments follow: residues 7–29 (GPAFLILFATLMAAAGDGVSIVA), 44–66 (ASIVASATMLPLLFATLVAGTAV), 73–95 (RVSMVADALSGAAVAGVPLVAWG), 100–122 (AVNVLVLAVLAALAAAFGPAGMT), 149–171 (ILNLAFIVGPAIGGLMIATVGGI), 175–197 (WITATAFGLSILAIAALQLEGAG), 218–240 (FVWNLRVLRTLGMIDLTVTALYL), 260–282 (LGWALMAIAGGGLVGALGYAVLA), 289–308 (VTMSTAVLTLGLASMVIAFL), 313–335 (VIMVLCAVVGLVYGPIQPIYNYV), 348–370 (VVGVMTSLAYAAGPLGLLLAGPL), and 375–397 (GLHATFLALALPIVCTGLVAIRL).

It belongs to the major facilitator superfamily. Drug:H(+) antiporter-3 (DHA3) (TC 2.A.1.21) family.

Its subcellular location is the cell inner membrane. Its activity is regulated as follows. Inhibited by piperine, verapamil and verapamil analogs. In terms of biological role, efflux pump that contributes to intrinsic antibiotic resistance. The pump uses the electrochemical gradient as a source of energy. Confers resistance to rifampicin. Confers low-level resistance to tetracycline and to several aminoglycosides, including streptomycin, gentamicin, 2'-N-ethylnetilmicin and 6'-N-ethylnetilmicin. The protein is Multidrug efflux pump Tap of Mycobacterium tuberculosis (strain ATCC 25618 / H37Rv).